Consider the following 722-residue polypeptide: Golgin subfamily A member 5 (722 aa).

At 1–689 (MSWFTDLAGR…IFLRRYPIAR (689 aa)) the chain is on the cytoplasmic side. 2 disordered regions span residues 90-158 (TRSS…VKPI) and 194-215 (TLSD…SHEL). Residues 91 to 109 (RSSIESSHNSSVNVSSHRS) show a composition bias toward low complexity. The span at 134–148 (DKVHSSSQKETRKES) shows a compositional bias: basic and acidic residues. The segment covering 149–158 (ASVNQAVKPI) has biased composition (polar residues). A compositionally biased stretch (low complexity) spans 195–209 (LSDSGSSASLSTTGD). Residues 211–622 (KSHELSNLRL…LEHQLKNVQG (412 aa)) are a coiled coil. Residues 690–710 (VFIIIYMALLHLWVMIVLLTY) form a helical; Anchor for type IV membrane protein membrane-spanning segment. Over 711–722 (TPEMHHDTPSGK) the chain is Lumenal.

The protein resides in the golgi apparatus membrane. Functionally, involved in maintaining Golgi structure. Stimulates the formation of Golgi stacks and ribbons. Involved in intra-Golgi retrograde transport. The polypeptide is Golgin subfamily A member 5 (golga5) (Xenopus laevis (African clawed frog)).